A 163-amino-acid chain; its full sequence is ATP synthase subunit delta, chloroplastic (163 aa).

Belongs to the ATPase delta chain family. As to quaternary structure, F-type ATPases have 2 components, F(1) - the catalytic core - and F(0) - the membrane proton channel. F(1) has five subunits: alpha(3), beta(3), gamma(1), delta(1), epsilon(1). CF(0) has four main subunits: a(1), b(1), b'(1) and c(10-14). The alpha and beta chains form an alternating ring which encloses part of the gamma chain. F(1) is attached to F(0) by a central stalk formed by the gamma and epsilon chains, while a peripheral stalk is formed by the delta, b and b' chains.

The protein localises to the plastid. It is found in the chloroplast thylakoid membrane. F(1)F(0) ATP synthase produces ATP from ADP in the presence of a proton or sodium gradient. F-type ATPases consist of two structural domains, F(1) containing the extramembraneous catalytic core and F(0) containing the membrane proton channel, linked together by a central stalk and a peripheral stalk. During catalysis, ATP synthesis in the catalytic domain of F(1) is coupled via a rotary mechanism of the central stalk subunits to proton translocation. Its function is as follows. This protein is part of the stalk that links CF(0) to CF(1). It either transmits conformational changes from CF(0) to CF(1) or is implicated in proton conduction. This Cyanidioschyzon merolae (strain NIES-3377 / 10D) (Unicellular red alga) protein is ATP synthase subunit delta, chloroplastic.